Here is a 455-residue protein sequence, read N- to C-terminus: Serine--tRNA ligase (455 aa).

An L-serine-binding site is contributed by 252 to 254 (TSE). Residues 283–285 (RKE) and valine 299 contribute to the ATP site. An L-serine-binding site is contributed by glutamate 306. 370–373 (EVVS) contacts ATP. Threonine 406 is an L-serine binding site.

It belongs to the class-II aminoacyl-tRNA synthetase family. Type-1 seryl-tRNA synthetase subfamily. As to quaternary structure, homodimer. The tRNA molecule binds across the dimer.

The protein localises to the cytoplasm. It carries out the reaction tRNA(Ser) + L-serine + ATP = L-seryl-tRNA(Ser) + AMP + diphosphate + H(+). The enzyme catalyses tRNA(Sec) + L-serine + ATP = L-seryl-tRNA(Sec) + AMP + diphosphate + H(+). It functions in the pathway aminoacyl-tRNA biosynthesis; selenocysteinyl-tRNA(Sec) biosynthesis; L-seryl-tRNA(Sec) from L-serine and tRNA(Sec): step 1/1. Catalyzes the attachment of serine to tRNA(Ser). Is also able to aminoacylate tRNA(Sec) with serine, to form the misacylated tRNA L-seryl-tRNA(Sec), which will be further converted into selenocysteinyl-tRNA(Sec). The polypeptide is Serine--tRNA ligase (Thermococcus sibiricus (strain DSM 12597 / MM 739)).